The primary structure comprises 759 residues: Xaa-Pro dipeptidyl-peptidase (759 aa).

Catalysis depends on charge relay system residues Ser347, Asp467, and His497.

The protein belongs to the peptidase S15 family. As to quaternary structure, homodimer.

It is found in the cytoplasm. The catalysed reaction is Hydrolyzes Xaa-Pro-|- bonds to release unblocked, N-terminal dipeptides from substrates including Ala-Pro-|-p-nitroanilide and (sequentially) Tyr-Pro-|-Phe-Pro-|-Gly-Pro-|-Ile.. Functionally, removes N-terminal dipeptides sequentially from polypeptides having unsubstituted N-termini provided that the penultimate residue is proline. The protein is Xaa-Pro dipeptidyl-peptidase of Streptococcus gordonii (strain Challis / ATCC 35105 / BCRC 15272 / CH1 / DL1 / V288).